The following is a 256-amino-acid chain: Ras-related protein Rab-26 (256 aa).

Positions 1-53 are disordered; it reads MSRKKTPKSKAGSAPATSALPAANGPRPVRPGTARPGPEAPPNGPPQPGRSSV. Residues 38 to 48 show a composition bias toward pro residues; the sequence is PEAPPNGPPQP. GTP contacts are provided by S72, G73, V74, G75, K76, T77, C78, S95, and T96. A Mg(2+)-binding site is contributed by T77. 2 short sequence motifs (switch) span residues 86–101 and 119–136; these read GAFL…GIDF and DTAG…YYRD. Mg(2+)-binding residues include T96 and D119. G122, N177, K178, D180, A208, and K209 together coordinate GTP. 2 S-geranylgeranyl cysteine lipidation sites follow: C253 and C254.

Belongs to the small GTPase superfamily. Rab family. Mg(2+) serves as cofactor.

Its subcellular location is the cell membrane. It catalyses the reaction GTP + H2O = GDP + phosphate + H(+). Its activity is regulated as follows. Regulated by guanine nucleotide exchange factors (GEFs) which promote the exchange of bound GDP for free GTP. Regulated by GTPase activating proteins (GAPs) which increase the GTP hydrolysis activity. Inhibited by GDP dissociation inhibitors (GDIs). Its function is as follows. The small GTPases Rab are key regulators of intracellular membrane trafficking, from the formation of transport vesicles to their fusion with membranes. Rabs cycle between an inactive GDP-bound form and an active GTP-bound form that is able to recruit to membranes different set of downstream effectors directly responsible for vesicle formation, movement, tethering and fusion. RAB26 mediates transport of ADRA2A and ADRA2B from the Golgi to the cell membrane. Plays a role in the maturation of zymogenic granules and in pepsinogen secretion in the stomach. Plays a role in the secretion of amylase from acinar granules in the parotid gland. This is Ras-related protein Rab-26 (RAB26) from Bos taurus (Bovine).